A 241-amino-acid polypeptide reads, in one-letter code: PHD finger protein ALFIN-LIKE 1 (241 aa).

Ala-2 is modified (N-acetylalanine). Positions 142 to 182 (DGKPSMDLGSKSRNGVKRSIEGQTKSTPKLMEESYEDEDDE) are disordered. The PHD-type zinc-finger motif lies at 185-237 (DTLCGSCGGNYTNDEFWICCDVCERWYHGKCVKITPAKAESIKQYKCPSCCTK).

Belongs to the Alfin family. As to quaternary structure, interacts with H3K4me3 and to a lesser extent with H3K4me2. In terms of tissue distribution, ubiquitously expressed.

It is found in the nucleus. Functionally, histone-binding component that specifically recognizes H3 tails trimethylated on 'Lys-4' (H3K4me3), which mark transcription start sites of virtually all active genes. The chain is PHD finger protein ALFIN-LIKE 1 (AL1) from Arabidopsis thaliana (Mouse-ear cress).